Here is a 422-residue protein sequence, read N- to C-terminus: Serpin A11 (422 aa).

The first 24 residues, 1–24, serve as a signal peptide directing secretion; it reads MGPVWLWLLIAELLLPVHYQPSSA. A disordered region spans residues 25-45; it reads HGDKSLGAPQPASHQSLEPAP. N-linked (GlcNAc...) asparagine glycosylation is found at asparagine 106, asparagine 169, asparagine 350, and asparagine 385.

Belongs to the serpin family.

The protein localises to the secreted. This Rattus norvegicus (Rat) protein is Serpin A11 (Serpina11).